We begin with the raw amino-acid sequence, 101 residues long: MGDILGAVYDLGHRPYLARRTVYEDRLILSTHGNICRAINLLTHDNRTTLVYHNNTKRIRFRGLLCALHGPYCGFRALCRVMLCSLPRLCDIPIRLVDDDD.

The polypeptide is RNA-3 uncharacterized 11.6 kDa protein (Beet necrotic yellow vein mosaic virus (isolate Yugoslavia/G1) (BNYVV)).